A 368-amino-acid chain; its full sequence is H-2 class I histocompatibility antigen, K-D alpha chain (368 aa).

A signal peptide spans 1–21; it reads MAPCTLLLLLAAALAPTQTRA. The interval 22–111 is alpha-1; it reads GPHSLRYFVT…AQRYYNQSKG (90 aa). Residues 22 to 305 lie on the Extracellular side of the membrane; the sequence is GPHSLRYFVT…KLPPSTVSNT (284 aa). N-linked (GlcNAc...) asparagine glycosylation occurs at N107. Positions 112-203 are alpha-2; sequence GSHTFQRMFG…ELGNETLLRT (92 aa). C122 and C185 form a disulfide bridge. 2 N-linked (GlcNAc...) asparagine glycosylation sites follow: N197 and N277. Residues 204-295 are alpha-3; sequence DSPKAHVTYH…GLPEPLTLRW (92 aa). The Ig-like C1-type domain occupies 206-294; that stretch reads PKAHVTYHPR…KGLPEPLTLR (89 aa). C224 and C280 form a disulfide bridge. Residues 296–305 form a connecting peptide region; that stretch reads KLPPSTVSNT. Residues 306–328 traverse the membrane as a helical segment; the sequence is VIIAVLVVLGAAIVTGAVVAFVM. The Cytoplasmic portion of the chain corresponds to 329–368; it reads KMRRNTGGKGVNYALAPGSQTSDLSLPDGKVMVHDPHSLA. 2 positions are modified to phosphoserine: S350 and S353.

The protein belongs to the MHC class I family. Heterodimer of an alpha chain and a beta chain (beta-2-microglobulin).

The protein resides in the membrane. In terms of biological role, involved in the presentation of foreign antigens to the immune system. In Mus musculus (Mouse), this protein is H-2 class I histocompatibility antigen, K-D alpha chain (H2-K1).